The sequence spans 410 residues: 2,3-bisphosphoglycerate-independent phosphoglycerate mutase (410 aa).

This sequence belongs to the BPG-independent phosphoglycerate mutase family. A-PGAM subfamily.

The catalysed reaction is (2R)-2-phosphoglycerate = (2R)-3-phosphoglycerate. Its pathway is carbohydrate degradation; glycolysis; pyruvate from D-glyceraldehyde 3-phosphate: step 3/5. Catalyzes the interconversion of 2-phosphoglycerate and 3-phosphoglycerate. This chain is 2,3-bisphosphoglycerate-independent phosphoglycerate mutase, found in Pyrococcus abyssi (strain GE5 / Orsay).